Reading from the N-terminus, the 435-residue chain is 26S proteasome regulatory subunit 7 (435 aa).

The span at 1-23 (MPDHLGDDMRKTKKDDTKEEEKN) shows a compositional bias: basic and acidic residues. Residues 1–24 (MPDHLGDDMRKTKKDDTKEEEKNF) form a disordered region. Residue 218–225 (GPPGTGKT) coordinates ATP.

This sequence belongs to the AAA ATPase family.

Its subcellular location is the cytoplasm. It localises to the nucleus. Functionally, the 26S proteasome is involved in the ATP-dependent degradation of ubiquitinated proteins. The regulatory (or ATPase) complex confers ATP dependency and substrate specificity to the 26S complex. The protein is 26S proteasome regulatory subunit 7 (rpt-1) of Caenorhabditis elegans.